A 344-amino-acid polypeptide reads, in one-letter code: Mitochondrial mRNA pseudouridine synthase Rpusd3 (344 aa).

Residues 1 to 36 (MGALRVLRYVSMIWRPELGSCARQRDAGFGTEARRP) constitute a mitochondrion transit peptide. The tract at residues 25–53 (RDAGFGTEARRPSQPHRSSKHKDLVEDQP) is disordered.

The protein belongs to the pseudouridine synthase RluA family. In terms of assembly, forms a regulatory protein-RNA complex, consisting of RCC1L, NGRN, RPUSD3, RPUSD4, TRUB2, FASTKD2 and 16S mt-rRNA.

Its subcellular location is the mitochondrion matrix. It catalyses the reaction a uridine in mRNA = a pseudouridine in mRNA. Catalyzes uridine to pseudouridine isomerization (pseudouridylation) of specific mitochondrial mRNAs (mt-mRNAs), a post-transcriptional modification necessary for their translation. Acts at position 390 in COXI mt-mRNA and at position 697-699 in mitochondrial COXIII mt-mRNA. As a component of a functional protein-RNA module, consisting of RCC1L, NGRN, RPUSD3, RPUSD4, TRUB2, FASTKD2 and 16S mitochondrial ribosomal RNA (16S mt-rRNA), controls 16S mt-rRNA abundance and may play a role in mitochondrial ribosome biogenesis. The polypeptide is Mitochondrial mRNA pseudouridine synthase Rpusd3 (Rpusd3) (Mus musculus (Mouse)).